The following is a 387-amino-acid chain: MTFTAPLQKDAIRIMLLGSGELGKEVAIEAQRLGIEVIAVDKYENAPAHLVANRSYAIDMQDKSAVLELIEKEQPSYILPEVEAISISALFEAEKRGFHVIPNAEAVNKTMNRKNIRVFAAETLDLKTSGYEFVTTLDGLKAAGERIGFPCVIKPVMSSSGHGQSIAKTANDIERSWEIAKEARGDASELIVEEFVPFDYEITLLTVRNETGTTFCEPIGHVQKDGDFILSWQPMQMSPEALKKAQEIAKAVTDGLGGRGIFGVEFFVKDEEVYFSELSPRPHDTGMVTLITQSQSEFALHVRAVLGLPLDFTFYGAGACGAYKAKNESHNPVLEIPDDAFTKDSFVRVFGKPESHVGRRMAVSLVLDEVKEAKRRATEIVETIDDH.

Residues 21-22 and Glu-81 contribute to the N(1)-(5-phospho-beta-D-ribosyl)glycinamide site; that span reads EL. Residues Arg-113, Lys-154, 159–164, 193–196, and Glu-201 each bind ATP; these read SSGHGQ and EEFV. One can recognise an ATP-grasp domain in the interval 118–306; that stretch reads VFAAETLDLK…EFALHVRAVL (189 aa). The Mg(2+) site is built by Glu-265 and Glu-277. N(1)-(5-phospho-beta-D-ribosyl)glycinamide contacts are provided by residues Asp-284, Lys-352, and 359–360; that span reads RR.

The protein belongs to the PurK/PurT family. As to quaternary structure, homodimer.

The enzyme catalyses N(1)-(5-phospho-beta-D-ribosyl)glycinamide + formate + ATP = N(2)-formyl-N(1)-(5-phospho-beta-D-ribosyl)glycinamide + ADP + phosphate + H(+). It functions in the pathway purine metabolism; IMP biosynthesis via de novo pathway; N(2)-formyl-N(1)-(5-phospho-D-ribosyl)glycinamide from N(1)-(5-phospho-D-ribosyl)glycinamide (formate route): step 1/1. In terms of biological role, involved in the de novo purine biosynthesis. Catalyzes the transfer of formate to 5-phospho-ribosyl-glycinamide (GAR), producing 5-phospho-ribosyl-N-formylglycinamide (FGAR). Formate is provided by PurU via hydrolysis of 10-formyl-tetrahydrofolate. The polypeptide is Formate-dependent phosphoribosylglycinamide formyltransferase (Sulfurovum sp. (strain NBC37-1)).